The chain runs to 805 residues: MRYDFSKTEKKWQARWKQQETFKTGEAPEKPKYYVLDMFPYPSGSGLHVGHLEGYTASDISARYRRSRGYNVLHPMGWDAFGLPAEQFAIKTGTHPSDTTQKNIANFKETLQAMGFSYDWSREINTTDPGYFQWTQWIFLKLHEMGLAYMSEVDVNWCVELRAVLANEEVEEKLADGLTVVRRPLRQWVLKITAYADRLLEDLDGLDWPENVKQMQRNWIGRSEGVEVDFELRCHRTMLRVYTTRPDTLFGATYLVISPEHAMAEKLATAQQLVAVKEYIAKAKLKTELERTGLQKDKTGVFTGSYAINPATGEPLPVWISDFVLTSYGTGAIMSVPAHDSRDWEFAKQYGLPIIEVVKSPHDVQQEVFEGKDSTVVNSSNNDISLNGLAFPEAFELMASWLEKKKAGKRKVNYRLRDWIFSRQRYWGEPIPIKHYPDGTLKPETSLPLMLPEVEAYQPTETGESPLANIPEWLNGTDENGPFRRETNTMPQWAGSCWYYLRFIDPHNSKLPVDPAKEAYWMNVDLYIGGAEHAVLHLLYARFWHKVLFDLKVVSTKEPFQRLFNQGMILGEDNEKMSKSRGNVIPADHVLQTYGADAVRLYEMFLGPLEQVKPWNTNGIEGISRFLSRVWRLVWPEPEGTRADLSTLAPSPDLLRRMHKTIKKVAADTENLKFNTAIAEMMVFTNELHRTGEGSRIAVETLLLLLAPYAPHLSEELWEALGHQESISLAPFPEFDPELAQDKEVTIAVQVNGKLRGSFTAAPGSPKEQLLNEAKALEGVKKFLEGVTIMKEIVVPDKLINFAVK.

The short motif at 40–51 (PYPSGSGLHVGH) is the 'HIGH' region element. The short motif at 576–580 (KMSKS) is the 'KMSKS' region element. Residue lysine 579 participates in ATP binding.

This sequence belongs to the class-I aminoacyl-tRNA synthetase family.

The protein localises to the cytoplasm. It catalyses the reaction tRNA(Leu) + L-leucine + ATP = L-leucyl-tRNA(Leu) + AMP + diphosphate. The chain is Leucine--tRNA ligase from Chlorobium phaeovibrioides (strain DSM 265 / 1930) (Prosthecochloris vibrioformis (strain DSM 265)).